The chain runs to 186 residues: Small ribosomal subunit protein eS7 (186 aa).

Belongs to the eukaryotic ribosomal protein eS7 family. Component of the small ribosomal subunit. Mature ribosomes consist of a small (40S) and a large (60S) subunit. The 40S subunit contains about 32 different proteins and 1 molecule of RNA (18S). The 60S subunit contains 45 different proteins and 3 molecules of RNA (25S, 5.8S and 5S).

Its subcellular location is the cytoplasm. Component of the ribosome, a large ribonucleoprotein complex responsible for the synthesis of proteins in the cell. The small ribosomal subunit (SSU) binds messenger RNAs (mRNAs) and translates the encoded message by selecting cognate aminoacyl-transfer RNA (tRNA) molecules. The large subunit (LSU) contains the ribosomal catalytic site termed the peptidyl transferase center (PTC), which catalyzes the formation of peptide bonds, thereby polymerizing the amino acids delivered by tRNAs into a polypeptide chain. The nascent polypeptides leave the ribosome through a tunnel in the LSU and interact with protein factors that function in enzymatic processing, targeting, and the membrane insertion of nascent chains at the exit of the ribosomal tunnel. RPS7A is involved in nucleolar processing of pre-18S ribosomal RNA and ribosome assembly. This Candida albicans (strain SC5314 / ATCC MYA-2876) (Yeast) protein is Small ribosomal subunit protein eS7 (RPS7A).